Consider the following 279-residue polypeptide: Shikimate dehydrogenase (NADP(+)) (279 aa).

Residues 20–22 (SRS) and threonine 67 each bind shikimate. The active-site Proton acceptor is the lysine 71. Residue aspartate 83 coordinates NADP(+). Shikimate-binding residues include asparagine 92 and aspartate 108. Residues 134-138 (GAGGA) and leucine 223 contribute to the NADP(+) site. Tyrosine 225 contributes to the shikimate binding site. Glycine 246 lines the NADP(+) pocket.

It belongs to the shikimate dehydrogenase family. Homodimer.

It catalyses the reaction shikimate + NADP(+) = 3-dehydroshikimate + NADPH + H(+). Its pathway is metabolic intermediate biosynthesis; chorismate biosynthesis; chorismate from D-erythrose 4-phosphate and phosphoenolpyruvate: step 4/7. In terms of biological role, involved in the biosynthesis of the chorismate, which leads to the biosynthesis of aromatic amino acids. Catalyzes the reversible NADPH linked reduction of 3-dehydroshikimate (DHSA) to yield shikimate (SA). This is Shikimate dehydrogenase (NADP(+)) from Cereibacter sphaeroides (strain ATCC 17029 / ATH 2.4.9) (Rhodobacter sphaeroides).